A 157-amino-acid polypeptide reads, in one-letter code: Protein GrpE (157 aa).

The span at 1-10 (MQEENQHPEQ) shows a compositional bias: basic and acidic residues. The disordered stretch occupies residues 1–21 (MQEENQHPEQDDISEAQDAGA).

It belongs to the GrpE family. Homodimer.

It localises to the cytoplasm. Functionally, participates actively in the response to hyperosmotic and heat shock by preventing the aggregation of stress-denatured proteins, in association with DnaK and GrpE. It is the nucleotide exchange factor for DnaK and may function as a thermosensor. Unfolded proteins bind initially to DnaJ; upon interaction with the DnaJ-bound protein, DnaK hydrolyzes its bound ATP, resulting in the formation of a stable complex. GrpE releases ADP from DnaK; ATP binding to DnaK triggers the release of the substrate protein, thus completing the reaction cycle. Several rounds of ATP-dependent interactions between DnaJ, DnaK and GrpE are required for fully efficient folding. This chain is Protein GrpE, found in Methylovorus sp. (strain SS1 / DSM 11726).